Reading from the N-terminus, the 182-residue chain is UPF0149 protein HI_0817 (182 aa).

This sequence belongs to the UPF0149 family.

This is UPF0149 protein HI_0817 from Haemophilus influenzae (strain ATCC 51907 / DSM 11121 / KW20 / Rd).